Reading from the N-terminus, the 101-residue chain is Small ribosomal subunit protein uS14 (101 aa).

It belongs to the universal ribosomal protein uS14 family. As to quaternary structure, part of the 30S ribosomal subunit. Contacts proteins S3 and S10.

Its function is as follows. Binds 16S rRNA, required for the assembly of 30S particles and may also be responsible for determining the conformation of the 16S rRNA at the A site. This is Small ribosomal subunit protein uS14 from Saccharophagus degradans (strain 2-40 / ATCC 43961 / DSM 17024).